The chain runs to 750 residues: Photosystem I P700 chlorophyll a apoprotein A1 (750 aa).

Transmembrane regions (helical) follow at residues Val-72–Ala-95, Leu-158–His-181, Leu-197–Leu-221, Thr-293–Tyr-311, Trp-348–Tyr-371, Leu-387–Val-413, Ala-435–His-457, and Phe-532–Leu-550. Residues Cys-574 and Cys-583 each contribute to the [4Fe-4S] cluster site. 2 helical membrane passes run His-590 to Trp-611 and Leu-664 to Phe-686. A chlorophyll a'-binding site is contributed by His-675. Residues Met-683 and Tyr-691 each coordinate chlorophyll a. Position 692 (Trp-692) interacts with phylloquinone. The chain crosses the membrane as a helical span at residues Ala-724–Ala-744.

It belongs to the PsaA/PsaB family. As to quaternary structure, the PsaA/B heterodimer binds the P700 chlorophyll special pair and subsequent electron acceptors. PSI consists of a core antenna complex that captures photons, and an electron transfer chain that converts photonic excitation into a charge separation. The eukaryotic PSI reaction center is composed of at least 11 subunits. It depends on P700 is a chlorophyll a/chlorophyll a' dimer, A0 is one or more chlorophyll a, A1 is one or both phylloquinones and FX is a shared 4Fe-4S iron-sulfur center. as a cofactor.

It is found in the plastid. Its subcellular location is the chloroplast thylakoid membrane. The catalysed reaction is reduced [plastocyanin] + hnu + oxidized [2Fe-2S]-[ferredoxin] = oxidized [plastocyanin] + reduced [2Fe-2S]-[ferredoxin]. Its function is as follows. PsaA and PsaB bind P700, the primary electron donor of photosystem I (PSI), as well as the electron acceptors A0, A1 and FX. PSI is a plastocyanin-ferredoxin oxidoreductase, converting photonic excitation into a charge separation, which transfers an electron from the donor P700 chlorophyll pair to the spectroscopically characterized acceptors A0, A1, FX, FA and FB in turn. Oxidized P700 is reduced on the lumenal side of the thylakoid membrane by plastocyanin. In Chlorokybus atmophyticus (Soil alga), this protein is Photosystem I P700 chlorophyll a apoprotein A1.